Consider the following 156-residue polypeptide: 6,7-dimethyl-8-ribityllumazine synthase (156 aa).

5-amino-6-(D-ribitylamino)uracil is bound by residues Phe-23, 57-59 (AFE), and 81-83 (AVI). (2S)-2-hydroxy-3-oxobutyl phosphate is bound at residue 86 to 87 (ST). The Proton donor role is filled by His-89. Phe-114 is a binding site for 5-amino-6-(D-ribitylamino)uracil. Arg-128 is a binding site for (2S)-2-hydroxy-3-oxobutyl phosphate.

The protein belongs to the DMRL synthase family.

It catalyses the reaction (2S)-2-hydroxy-3-oxobutyl phosphate + 5-amino-6-(D-ribitylamino)uracil = 6,7-dimethyl-8-(1-D-ribityl)lumazine + phosphate + 2 H2O + H(+). Its pathway is cofactor biosynthesis; riboflavin biosynthesis; riboflavin from 2-hydroxy-3-oxobutyl phosphate and 5-amino-6-(D-ribitylamino)uracil: step 1/2. Catalyzes the formation of 6,7-dimethyl-8-ribityllumazine by condensation of 5-amino-6-(D-ribitylamino)uracil with 3,4-dihydroxy-2-butanone 4-phosphate. This is the penultimate step in the biosynthesis of riboflavin. This chain is 6,7-dimethyl-8-ribityllumazine synthase, found in Campylobacter curvus (strain 525.92).